A 217-amino-acid chain; its full sequence is Histone H1-gamma, late (217 aa).

Disordered regions lie at residues 1–21 (MSAAKPKVAKKARVAPAHPPS) and 80–217 (GKGA…PAKK). Positions 17 to 91 (AHPPSSQMVV…GASGSFKLGK (75 aa)) constitute an H15 domain. The segment covering 104–113 (IAAKKAKLAA) has biased composition (basic residues). Over residues 114–123 (KKKEQREKKA) the composition is skewed to basic and acidic residues. Basic residues predominate over residues 124-217 (LKTKARKEKV…AKKAAKPAKK (94 aa)).

It belongs to the histone H1/H5 family.

It localises to the nucleus. Its subcellular location is the chromosome. In terms of biological role, histones H1 are necessary for the condensation of nucleosome chains into higher-order structures. The polypeptide is Histone H1-gamma, late (Strongylocentrotus purpuratus (Purple sea urchin)).